The sequence spans 516 residues: Nuclear speckle splicing regulatory protein 1 (516 aa).

4 disordered regions span residues 1–43 (MATS…GESL), 111–137 (ERKK…KFAD), 151–170 (KERQ…EAAL), and 188–494 (QTVG…SSAR). Ser-33 is modified (phosphoserine). A coiled-coil region spans residues 100–176 (KYINQLLRAV…EAALDVKKQK (77 aa)). Residues 207-221 (TSSAAAERSPSPEST) show a composition bias toward low complexity. Basic and acidic residues-rich tracts occupy residues 222 to 239 (ANRR…DQVD) and 271 to 466 (ERER…KLVE). A coiled-coil region spans residues 358–401 (KGERDRRDNSPKDRERDRKGERDRRDNSPKDRERETRDKSPKDR).

The protein belongs to the NSRP1 family.

The sequence is that of Nuclear speckle splicing regulatory protein 1 (nsrp1) from Danio rerio (Zebrafish).